The sequence spans 183 residues: Abscisic acid receptor PYL10 (183 aa).

The tract at residues 20–172 is START-like; the sequence is HELVESQCSS…NLNSLADVTE (153 aa). A disulfide bridge connects residues cysteine 27 and cysteine 153. Residues lysine 56, 85-90, 112-118, and glutamate 137 contribute to the abscisate site; these read ATKSTE and RLKNYSS. The short motif at 81–85 is the Gate loop element; it reads SGLPA. The Latch loop motif lies at 111–113; it reads HRL.

Belongs to the PYR/PYL/RCAR abscisic acid intracellular receptor family. Monomer. Forms heterodimer with PYL13, thus antagonizing PP2Cs-binding and ABA-independent inhibition of PP2Cs. Homodimer. Binds ABA on one subunit only. Binds to CARs protein in an ABA-independent manner, both at the plasma membrane and in the nucleus. Interacts with ABI1 and HAB1, and possibly with other PP2Cs, in an ABA-independent manner.

Its subcellular location is the cytoplasm. It localises to the nucleus. It is found in the cell membrane. Its function is as follows. Receptor for abscisic acid (ABA) required for ABA-mediated responses such as stomatal closure and germination inhibition. Inhibits the activity of group-A protein phosphatases type 2C (PP2Cs) in an ABA-independent manner but more efficiently when activated by ABA. Can be activated by both (-)-ABA and (+)-ABA. The polypeptide is Abscisic acid receptor PYL10 (PYL10) (Arabidopsis thaliana (Mouse-ear cress)).